Here is an 80-residue protein sequence, read N- to C-terminus: Homeobox protein 7 (80 aa).

The segment at residues 8–67 is a DNA-binding region (homeobox); that stretch reads SNIRNIRSSGISTKKLEDFFSINQYPNKNEIKDFANYYQCDETKIKNWFKGKRDRLKKKS. The tract at residues 60–80 is disordered; that stretch reads RDRLKKKSSNNEKSGNKFYFK. The span at 70–80 shows a compositional bias: low complexity; the sequence is NEKSGNKFYFK.

The protein localises to the nucleus. Functionally, putative transcription factor. This is Homeobox protein 7 (hbx7) from Dictyostelium discoideum (Social amoeba).